Here is a 121-residue protein sequence, read N- to C-terminus: Large ribosomal subunit protein uL24 (121 aa).

Belongs to the universal ribosomal protein uL24 family. As to quaternary structure, part of the 50S ribosomal subunit.

Its function is as follows. One of two assembly initiator proteins, it binds directly to the 5'-end of the 23S rRNA, where it nucleates assembly of the 50S subunit. Functionally, located at the polypeptide exit tunnel on the outside of the subunit. The sequence is that of Large ribosomal subunit protein uL24 from Thermococcus kodakarensis (strain ATCC BAA-918 / JCM 12380 / KOD1) (Pyrococcus kodakaraensis (strain KOD1)).